We begin with the raw amino-acid sequence, 243 residues long: Vesicle-associated membrane protein-associated protein B (243 aa).

An N-acetylalanine modification is found at Ala2. The Cytoplasmic portion of the chain corresponds to 2–218 (AKVEQVLSLE…PASAMAGKEE (217 aa)). Positions 7-124 (VLSLEPQHEL…MDSKLRCVFE (118 aa)) constitute an MSP domain. Ser146 is subject to Phosphoserine. Lys147 participates in a covalent cross-link: Glycyl lysine isopeptide (Lys-Gly) (interchain with G-Cter in SUMO1). A Phosphothreonine modification is found at Thr150. A phosphoserine mark is found at Ser158, Ser159, and Ser160. Residues 161-196 (LDDTEVKKVMEECKRLQSEVQRLREENKQFKEEDGL) are a coiled coil. The span at 186–197 (ENKQFKEEDGLR) shows a compositional bias: basic and acidic residues. Positions 186–214 (ENKQFKEEDGLRMRKTAQSNSPAPASAMA) are disordered. Ser206 carries the post-translational modification Phosphoserine. A helical; Anchor for type IV membrane protein membrane pass occupies residues 219-239 (GLSTRLLALVVLFFIVGVIIG).

Belongs to the VAMP-associated protein (VAP) (TC 9.B.17) family. In terms of assembly, homodimer, and heterodimer with VAPA. Interacts with VAMP1 and VAMP2. Interacts (via MSP domain) with ZFYVE27. Interacts with RMDN3. Interacts with KIF5A in a ZFYVE27-dependent manner. Interacts (via MSP domain) with STARD3 (via phospho-FFAT motif). Interacts with STARD3NL (via FFAT motif). Interacts with CERT1. Interacts with PLEKHA3 and SACM1L to form a ternary complex. Interacts with VPS13A (via FFAT motif). Interacts with RB1CC1 (via phosphorylated FFAT motif), MIGA2 (via phosphorylated FFAT motif), RMDN3 (via phosphorylated FFAT motif), OSBPL1A (via FFAT motif), KCNB1 (via phosphorylated FFAT motif) and KCNB2 (via phosphorylated FFAT motif). Interacts (via MSP domain) with WDR44 (via FFAT motif); the interactions connect the endoplasmic reticulum (ER) with the endosomal tubule.

The protein resides in the endoplasmic reticulum membrane. Functionally, endoplasmic reticulum (ER)-anchored protein that mediates the formation of contact sites between the ER and endosomes via interaction with FFAT motif-containing proteins such as STARD3 or WDR44. Interacts with STARD3 in a FFAT motif phosphorylation dependent manner. Via interaction with WDR44 participates in neosynthesized protein export. Participates in the endoplasmic reticulum unfolded protein response (UPR) by inducing ERN1/IRE1 activity. Involved in cellular calcium homeostasis regulation. The sequence is that of Vesicle-associated membrane protein-associated protein B from Bos taurus (Bovine).